Consider the following 151-residue polypeptide: Macrodomain Ter protein (151 aa).

The protein belongs to the MatP family. Homodimer.

The protein localises to the cytoplasm. Functionally, required for spatial organization of the terminus region of the chromosome (Ter macrodomain) during the cell cycle. Prevents early segregation of duplicated Ter macrodomains during cell division. Binds specifically to matS, which is a 13 bp signature motif repeated within the Ter macrodomain. This Escherichia fergusonii (strain ATCC 35469 / DSM 13698 / CCUG 18766 / IAM 14443 / JCM 21226 / LMG 7866 / NBRC 102419 / NCTC 12128 / CDC 0568-73) protein is Macrodomain Ter protein.